The sequence spans 533 residues: MEKHHRLPLPELHDDKHRHKQCNGENSNRFRPPKYKTRGYVAVDNNNLNRSQSLGSCSTNSSQIAHAISFRDAGCSDSSTLPSSPVQAELSTLSLSHFEQCFERLAKLGEGSFGEVFQVRDRSDGQLYAVKISKQLFRGEQYRAERLEEVRRYEEFSGHENCIRFIRAWEQYDRLYMQMELCRESLEQYLLRCQRIPEERIWHILLDLLRGLKSLHDRNLIHLDIKLDNVLIGEDDETCKLADFGLVIDVDRANSHHATEGDSRYMAPEILQGHFSKAADIFSLGIAMLELACYMDLPSNGPLWHELRHGILPEEFINKISLELQSVIKSMMKPDPAQRPTAEQLLSHPKLQYLQKKRKSLMNFSMLSRSFRRSRRAVWGRMCNWKTAAFRYLLYFLEVLHLCKPITASQPNINIVPSSPSSKGVPLVPQVEFQLVGSTPIANRDCYASDFLSGEDPLDLSNQGSPNVINSTPLNTNQGKSRLDLLKNNVDSMGRYVHVHDFESPCSALSSAKVLDTSSFRRKKLFVLEYDDE.

The tract at residues 1 to 35 (MEKHHRLPLPELHDDKHRHKQCNGENSNRFRPPKY) is disordered. In terms of domain architecture, Protein kinase spans 102–351 (FERLAKLGEG…AEQLLSHPKL (250 aa)). ATP-binding positions include 108–116 (LGEGSFGEV) and K131. Catalysis depends on D224, which acts as the Proton acceptor. 2 residues coordinate Mg(2+): N229 and D243. Residues S504 and S519 each carry the phosphoserine modification.

Belongs to the protein kinase superfamily. Ser/Thr protein kinase family. WEE1 subfamily.

Its subcellular location is the golgi apparatus membrane. The catalysed reaction is L-seryl-[protein] + ATP = O-phospho-L-seryl-[protein] + ADP + H(+). It carries out the reaction L-threonyl-[protein] + ATP = O-phospho-L-threonyl-[protein] + ADP + H(+). Its function is as follows. Acts as a negative regulator of entry into mitosis (G2 to M transition) by phosphorylation of Cdk1 specifically when Cdk1 is complexed to cyclins. Mediates phosphorylation of Cdk1 predominantly on 'Thr-14'. Also involved in Golgi fragmentation. May be involved in phosphorylation of Cdk1 on 'Tyr-15' to a lesser degree, however tyrosine kinase activity is unclear and may be indirect. May be a downstream target of Notch signaling pathway during eye development. This chain is Membrane-associated tyrosine- and threonine-specific cdc2-inhibitory kinase (Myt1), found in Drosophila melanogaster (Fruit fly).